Reading from the N-terminus, the 485-residue chain is GlcNAc-binding protein A (485 aa).

The N-terminal stretch at 1-23 (MKKQPKMTAIALILSGISGLAYG) is a signal peptide. Residues 24-201 (HGYVSAVENG…SFYNVIDVKF (178 aa)) enclose the Chitin-binding type-4 domain. Positions 437 to 478 (AGTKVLASDGAIYQCKPWPYSGYCQQWTSNATQYQPGTGSHW) constitute a Chitin-binding type-3 domain.

It belongs to the GbpA family.

The protein localises to the secreted. Probably interacts with GlcNAc residues. May promote attachment to both epithelial cell surfaces and chitin. This is GlcNAc-binding protein A from Vibrio cholerae serotype O1 (strain M66-2).